The chain runs to 201 residues: Small ribosomal subunit protein uS4 (201 aa).

Residues 91-151 (SRLDNVVYRA…EKSQKMNWFE (61 aa)) enclose the S4 RNA-binding domain.

Belongs to the universal ribosomal protein uS4 family. Part of the 30S ribosomal subunit. Contacts protein S5. The interaction surface between S4 and S5 is involved in control of translational fidelity.

Functionally, one of the primary rRNA binding proteins, it binds directly to 16S rRNA where it nucleates assembly of the body of the 30S subunit. With S5 and S12 plays an important role in translational accuracy. The chain is Small ribosomal subunit protein uS4 from Corynebacterium glutamicum (strain ATCC 13032 / DSM 20300 / JCM 1318 / BCRC 11384 / CCUG 27702 / LMG 3730 / NBRC 12168 / NCIMB 10025 / NRRL B-2784 / 534).